Reading from the N-terminus, the 450-residue chain is Crinkler effector protein 63 (450 aa).

Residues 1–17 (MVKLFCAIVGAAGSAFP) form the signal peptide. Positions 18–55 (VDIDAGQSAGDLKDAIKAKNPATITCDAKDLQLSLAKT) are LQLFLAK domain. Residues 58–117 (GAWLPDDDQAALDLEDGKVHEDIQALIDGEKMKATWTIEDVLTANNMTKRKGRAPKSRQI) form a DWL domain region. An N-linked (GlcNAc...) asparagine glycan is attached at Asn103. Positions 118-124 (HVLVVVP) match the HVLVXXP motif motif. The tract at residues 125–450 (EGAFGSASET…RSIPTFSYFS (326 aa)) is effector domain. The short motif at 218–224 (QRKRYRR) is the Nuclear localization signal (NLS) element. N-linked (GlcNAc...) asparagine glycosylation occurs at Asn342.

It belongs to the Crinkler effector family. As to quaternary structure, forms a homodimer via an inverted association manner. Forms heterodimers with CRN79 and CRN115.

It localises to the secreted. It is found in the host nucleus. The protein localises to the host nucleoplasm. In terms of biological role, secreted effector that, with CRN115, is critical to pathogenesis by modulating host defenses. Induces cell death in plant host cells. Suppresses callose deposition and affects expression of defense-related genes including two salicylic acid (SA) signal-induced and antimicrobial PR genes (PR1 and PR2), and genes involved in jasmonic acid (JA)/ethylene (ET)-mediated defense pathway (ERF1, ORA59, PDF1.2). CRN115 and CRN63 may share the same molecular host targets that are involved in the cell death signal transduction pathway and that their differential activities are dependent on plant nuclear localization or not. Does not affect MAPK activation and BIK1 phosphorylation and acts downstream of the MAPK cascades in PTI signaling. The chain is Crinkler effector protein 63 from Phytophthora sojae (strain P6497) (Soybean stem and root rot agent).